An 80-amino-acid chain; its full sequence is Conotoxin Pu11.1 (80 aa).

An N-terminal signal peptide occupies residues 1–19 (MKLVLAIVLILMLLSLSTG). A propeptide spanning residues 20-42 (AEMSDNHASRSATALTDRLLGPK) is cleaved from the precursor. 4 cysteine pairs are disulfide-bonded: cysteine 46–cysteine 60, cysteine 53–cysteine 65, cysteine 59–cysteine 72, and cysteine 64–cysteine 79.

Belongs to the conotoxin I3 superfamily. As to expression, expressed by the venom duct.

It is found in the secreted. The protein is Conotoxin Pu11.1 of Conus pulicarius (Flea-bitten cone).